A 248-amino-acid chain; its full sequence is tRNA pseudouridine synthase A (248 aa).

D52 acts as the Nucleophile in catalysis. Position 111 (Y111) interacts with substrate.

Belongs to the tRNA pseudouridine synthase TruA family. In terms of assembly, homodimer.

The catalysed reaction is uridine(38/39/40) in tRNA = pseudouridine(38/39/40) in tRNA. Functionally, formation of pseudouridine at positions 38, 39 and 40 in the anticodon stem and loop of transfer RNAs. The protein is tRNA pseudouridine synthase A of Methylocella silvestris (strain DSM 15510 / CIP 108128 / LMG 27833 / NCIMB 13906 / BL2).